A 57-amino-acid polypeptide reads, in one-letter code: Large ribosomal subunit protein uL30 (57 aa).

Belongs to the universal ribosomal protein uL30 family. Part of the 50S ribosomal subunit.

The protein is Large ribosomal subunit protein uL30 of Buchnera aphidicola subsp. Cinara cedri (strain Cc).